The following is a 33-amino-acid chain: Protamine TP17 (33 aa).

The disordered stretch occupies residues 1 to 33 (MPRRRRSSSRPVRRRRRPRVSRRRRRRGRRRRR).

In terms of tissue distribution, testis.

It is found in the nucleus. Its subcellular location is the chromosome. Its function is as follows. Protamines substitute for histones in the chromatin of sperm during the haploid phase of spermatogenesis. They compact sperm DNA into a highly condensed, stable and inactive complex. The protein is Protamine TP17 of Oncorhynchus mykiss (Rainbow trout).